Reading from the N-terminus, the 1058-residue chain is COP1-interacting protein 7 (1058 aa).

Disordered stretches follow at residues 123 to 147 (LGGT…GDTV), 262 to 281 (HGNS…QEGR), and 330 to 463 (MGDV…GNDN). Composition is skewed to polar residues over residues 126–136 (TWTSQKSTALS) and 262–276 (HGNS…SFET). Positions 340 to 347 (SKKKKKKK) match the Nuclear localization signal 1 motif. Basic residues predominate over residues 340–353 (SKKKKKKKKNKKKS). Acidic residues predominate over residues 403 to 414 (DSDESGEEEGFV). Residues 431-438 (ERRHKSTS) carry the Nuclear localization signal 2 motif. Residues 432 to 446 (RRHKSTSHRQRKHKS) are compositionally biased toward basic residues. Residues 447-462 (HNGDDDSSNKETKGND) show a composition bias toward basic and acidic residues. Position 477 is a phosphoserine (serine 477). Residues 708 to 887 (AGEQTLDGKE…KSVELSRDPS (180 aa)) form a disordered region. Basic and acidic residues predominate over residues 757–773 (SKSEMEEERKKRMEELL). A Nuclear localization signal 3 motif is present at residues 764 to 771 (ERKKRMEE). The segment covering 783-808 (KSSGGSVSSSLASKKTPTVTKSVKSS) has biased composition (low complexity). Basic and acidic residues-rich tracts occupy residues 860 to 869 (KTEKAQEKKS) and 878 to 887 (KSVELSRDPS). Serine 915, serine 986, and serine 992 each carry phosphoserine. Residues 1020-1041 (STPPATEADHSRKKWNSEETSP) are disordered. Basic and acidic residues predominate over residues 1026-1040 (EADHSRKKWNSEETS).

Interacts with COP1.

The protein resides in the nucleus. Functionally, exhibits transcriptional activation activity. Positive regulator of light-regulated genes, probably being a direct downstream target of COP1 for mediating light control of gene expression. The protein is COP1-interacting protein 7 of Arabidopsis thaliana (Mouse-ear cress).